The chain runs to 199 residues: Secreted chorismate mutase (199 aa).

An N-terminal signal peptide occupies residues 1–33; it reads MLTRPREIYLATAVSIGILLSLIAPLGPPLARA. One can recognise a Chorismate mutase domain in the interval 34 to 113; the sequence is DGTSQLAELV…ATEAIEYSRF (80 aa). Substrate contacts are provided by residues Arg49, Lys60, Asp69, 72–76, 105–109, and Arg134; these read RVEQQ and TEAIE. Cys160 and Cys193 are disulfide-bonded.

As to quaternary structure, homodimer.

The protein localises to the secreted. It catalyses the reaction chorismate = prephenate. It participates in metabolic intermediate biosynthesis; prephenate biosynthesis; prephenate from chorismate: step 1/1. Tyrosine, phenylalanine, and tryptophan moderately enhance chorismate mutase activity at low concentrations, but allosterically inhibit the enzyme at higher concentrations. Catalyzes the Claisen rearrangement of chorismate to prephenate. May play some role in the pathogenicity. The protein is Secreted chorismate mutase of Mycobacterium tuberculosis (strain ATCC 25618 / H37Rv).